The chain runs to 204 residues: MTENQLYSFITMKSSLSKCKQSSSLSFPLFGLINFFLIGFFRWVSFAQLFFSRFWPLVQHQQCVSEKKSKDLEFQTSIKHEEYRDDDDDGLCREDVGMVMKSLGLSTDQENEGLQKQYSSKEVSNLFEEKEPSLEEVKQAFDVFDENRDGFIDPIDLQRVLTILGLKQGSNLENCRRMIRSFDGSKDGRIDFYGFVKFMENNFC.

EF-hand domains are found at residues 72 to 106 (LEFQTSIKHEEYRDDDDDGLCREDVGMVMKSLGLS), 132 to 167 (PSLEEVKQAFDVFDENRDGFIDPIDLQRVLTILGLK), and 170 to 204 (SNLENCRRMIRSFDGSKDGRIDFYGFVKFMENNFC). Positions 145, 147, 149, and 156 each coordinate Ca(2+).

In terms of biological role, potential calcium sensor. The chain is Probable calcium-binding protein CML46 from Arabidopsis thaliana (Mouse-ear cress).